Here is a 120-residue protein sequence, read N- to C-terminus: NADH dehydrogenase [ubiquinone] 1 subunit C2 (120 aa).

N-acetylmethionine is present on methionine 1. Residues 57 to 76 traverse the membrane as a helical segment; the sequence is GLHRQLLYITSFVFVGYYLL.

The protein belongs to the complex I NDUFC2 subunit family. Complex I is composed of 45 different subunits. Interacts with TMEM242. There is a minor unacetylated form of subunit B14.5b.

The protein resides in the mitochondrion inner membrane. Functionally, accessory subunit of the mitochondrial membrane respiratory chain NADH dehydrogenase (Complex I), that is believed not to be involved in catalysis but required for the complex assembly. Complex I functions in the transfer of electrons from NADH to the respiratory chain. The immediate electron acceptor for the enzyme is believed to be ubiquinone. The chain is NADH dehydrogenase [ubiquinone] 1 subunit C2 from Bos taurus (Bovine).